Consider the following 234-residue polypeptide: Uridylate kinase (234 aa).

9 to 12 (KLSG) serves as a coordination point for ATP. Gly51 provides a ligand contact to UMP. ATP contacts are provided by Gly52 and Arg56. UMP-binding positions include Asp71 and 132–139 (CGNPFFTT). 3 residues coordinate ATP: Thr159, Tyr165, and Asp168.

The protein belongs to the UMP kinase family. As to quaternary structure, homohexamer.

The protein resides in the cytoplasm. It catalyses the reaction UMP + ATP = UDP + ADP. Its pathway is pyrimidine metabolism; CTP biosynthesis via de novo pathway; UDP from UMP (UMPK route): step 1/1. Its activity is regulated as follows. Inhibited by UTP. Its function is as follows. Catalyzes the reversible phosphorylation of UMP to UDP. This Prochlorococcus marinus (strain MIT 9301) protein is Uridylate kinase.